A 236-amino-acid polypeptide reads, in one-letter code: 2,3,4,5-tetrahydropyridine-2,6-dicarboxylate N-acetyltransferase (236 aa).

This sequence belongs to the transferase hexapeptide repeat family. DapH subfamily.

The catalysed reaction is (S)-2,3,4,5-tetrahydrodipicolinate + acetyl-CoA + H2O = L-2-acetamido-6-oxoheptanedioate + CoA. It functions in the pathway amino-acid biosynthesis; L-lysine biosynthesis via DAP pathway; LL-2,6-diaminopimelate from (S)-tetrahydrodipicolinate (acetylase route): step 1/3. Functionally, catalyzes the transfer of an acetyl group from acetyl-CoA to tetrahydrodipicolinate. This is 2,3,4,5-tetrahydropyridine-2,6-dicarboxylate N-acetyltransferase from Geobacillus kaustophilus (strain HTA426).